A 346-amino-acid polypeptide reads, in one-letter code: Protein RecA (346 aa).

67 to 74 provides a ligand contact to ATP; it reads GPESSGKT.

The protein belongs to the RecA family.

Its subcellular location is the cytoplasm. In terms of biological role, can catalyze the hydrolysis of ATP in the presence of single-stranded DNA, the ATP-dependent uptake of single-stranded DNA by duplex DNA, and the ATP-dependent hybridization of homologous single-stranded DNAs. It interacts with LexA causing its activation and leading to its autocatalytic cleavage. The chain is Protein RecA from Mycobacterium ulcerans (strain Agy99).